We begin with the raw amino-acid sequence, 153 residues long: Endoribonuclease YbeY (153 aa).

Zn(2+)-binding residues include His-116, His-120, and His-126.

This sequence belongs to the endoribonuclease YbeY family. The cofactor is Zn(2+).

It localises to the cytoplasm. Functionally, single strand-specific metallo-endoribonuclease involved in late-stage 70S ribosome quality control and in maturation of the 3' terminus of the 16S rRNA. The protein is Endoribonuclease YbeY of Leifsonia xyli subsp. xyli (strain CTCB07).